Here is a 296-residue protein sequence, read N- to C-terminus: Cytidine deaminase (296 aa).

2 CMP/dCMP-type deaminase domains span residues 52–172 (TAVE…FGPK) and 191–296 (THAD…YFAL). Residue 93 to 95 (NQE) participates in substrate binding. Zn(2+) is bound at residue His106. Residue Glu108 is the Proton donor of the active site. 2 residues coordinate Zn(2+): Cys133 and Cys136.

This sequence belongs to the cytidine and deoxycytidylate deaminase family. Homodimer. Zn(2+) serves as cofactor.

It carries out the reaction cytidine + H2O + H(+) = uridine + NH4(+). It catalyses the reaction 2'-deoxycytidine + H2O + H(+) = 2'-deoxyuridine + NH4(+). Functionally, this enzyme scavenges exogenous and endogenous cytidine and 2'-deoxycytidine for UMP synthesis. The polypeptide is Cytidine deaminase (Actinobacillus succinogenes (strain ATCC 55618 / DSM 22257 / CCUG 43843 / 130Z)).